The sequence spans 741 residues: Catalase-peroxidase (741 aa).

The first 23 residues, 1–23 (MLKKIITALGMSGMLLASSNAIA), serve as a signal peptide directing secretion. The tryptophyl-tyrosyl-methioninium (Trp-Tyr) (with M-249) cross-link spans 102 to 223 (WHDAGTYRIY…YAATQMGLIY (122 aa)). H103 functions as the Proton acceptor in the catalytic mechanism. A cross-link (tryptophyl-tyrosyl-methioninium (Tyr-Met) (with W-102)) is located at residues 223–249 (YVNPEGPDGKPDIKGAASEIRQAFRAM). H264 contributes to the heme b binding site.

The protein belongs to the peroxidase family. Peroxidase/catalase subfamily. Homodimer or homotetramer. The cofactor is heme b. Formation of the three residue Trp-Tyr-Met cross-link is important for the catalase, but not the peroxidase activity of the enzyme.

The enzyme catalyses H2O2 + AH2 = A + 2 H2O. It catalyses the reaction 2 H2O2 = O2 + 2 H2O. Bifunctional enzyme with both catalase and broad-spectrum peroxidase activity. The polypeptide is Catalase-peroxidase (Francisella tularensis subsp. holarctica (strain FTNF002-00 / FTA)).